A 225-amino-acid polypeptide reads, in one-letter code: 7-cyano-7-deazaguanine synthase (225 aa).

An ATP-binding site is contributed by 10 to 20 (FSGGQDSTTLA). Zn(2+) contacts are provided by C190, C205, C208, and C211.

This sequence belongs to the QueC family. Requires Zn(2+) as cofactor.

It catalyses the reaction 7-carboxy-7-deazaguanine + NH4(+) + ATP = 7-cyano-7-deazaguanine + ADP + phosphate + H2O + H(+). Its pathway is purine metabolism; 7-cyano-7-deazaguanine biosynthesis. Functionally, catalyzes the ATP-dependent conversion of 7-carboxy-7-deazaguanine (CDG) to 7-cyano-7-deazaguanine (preQ(0)). This Helicobacter acinonychis (strain Sheeba) protein is 7-cyano-7-deazaguanine synthase.